We begin with the raw amino-acid sequence, 251 residues long: Triosephosphate isomerase, glycosomal (251 aa).

Substrate-binding residues include Asn-12 and Lys-14. His-96 (electrophile) is an active-site residue. The active-site Proton acceptor is Glu-168.

This sequence belongs to the triosephosphate isomerase family. In terms of assembly, homodimer.

It localises to the glycosome. The enzyme catalyses D-glyceraldehyde 3-phosphate = dihydroxyacetone phosphate. It participates in carbohydrate biosynthesis; gluconeogenesis. Its pathway is carbohydrate degradation; glycolysis; D-glyceraldehyde 3-phosphate from glycerone phosphate: step 1/1. The sequence is that of Triosephosphate isomerase, glycosomal from Trypanosoma cruzi.